A 344-amino-acid polypeptide reads, in one-letter code: Dihydroorotase (344 aa).

2 residues coordinate Zn(2+): His13 and His15. Residues 15-17 (HLR) and Asn41 each bind substrate. Lys99, His136, and His174 together coordinate Zn(2+). Lys99 bears the N6-carboxylysine mark. His136 contributes to the substrate binding site. Leu219 lines the substrate pocket. Residue Asp247 participates in Zn(2+) binding. The active site involves Asp247. Substrate-binding residues include His251 and Ala263.

It belongs to the metallo-dependent hydrolases superfamily. DHOase family. Class II DHOase subfamily. Homodimer. Zn(2+) serves as cofactor.

It carries out the reaction (S)-dihydroorotate + H2O = N-carbamoyl-L-aspartate + H(+). The protein operates within pyrimidine metabolism; UMP biosynthesis via de novo pathway; (S)-dihydroorotate from bicarbonate: step 3/3. Its function is as follows. Catalyzes the reversible cyclization of carbamoyl aspartate to dihydroorotate. This Acinetobacter baumannii (strain SDF) protein is Dihydroorotase.